Here is a 412-residue protein sequence, read N- to C-terminus: Putative competence-damage inducible protein (412 aa).

It belongs to the CinA family.

The polypeptide is Putative competence-damage inducible protein (Bacillus cereus (strain B4264)).